We begin with the raw amino-acid sequence, 153 residues long: NADPH-dependent 7-cyano-7-deazaguanine reductase (153 aa).

The disordered stretch occupies residues 1–26; the sequence is MVKIHDGASQLGANVAAPRSPEEATL. Cys51 serves as the catalytic Thioimide intermediate. Residue Asp58 is the Proton donor of the active site. Residues 73–75 and 92–93 each bind substrate; these read VES and HE.

The protein belongs to the GTP cyclohydrolase I family. QueF type 1 subfamily.

Its subcellular location is the cytoplasm. The catalysed reaction is 7-aminomethyl-7-carbaguanine + 2 NADP(+) = 7-cyano-7-deazaguanine + 2 NADPH + 3 H(+). It functions in the pathway tRNA modification; tRNA-queuosine biosynthesis. Functionally, catalyzes the NADPH-dependent reduction of 7-cyano-7-deazaguanine (preQ0) to 7-aminomethyl-7-deazaguanine (preQ1). The sequence is that of NADPH-dependent 7-cyano-7-deazaguanine reductase from Methylocella silvestris (strain DSM 15510 / CIP 108128 / LMG 27833 / NCIMB 13906 / BL2).